Reading from the N-terminus, the 528-residue chain is Glutamyl-tRNA(Gln) amidotransferase subunit A, mitochondrial (528 aa).

Residue Lys76 is the Charge relay system of the active site. The segment at 147 to 166 (QYREKRKQNPHSKNEDSDWL) is disordered. Ser171 functions as the Charge relay system in the catalytic mechanism. Catalysis depends on Ser195, which acts as the Acyl-ester intermediate.

It belongs to the amidase family. GatA subfamily. Subunit of the heterotrimeric GatCAB amidotransferase (AdT) complex, composed of A (QRSL1), B (GATB) and C (GATC) subunits.

Its subcellular location is the mitochondrion. The enzyme catalyses L-glutamyl-tRNA(Gln) + L-glutamine + ATP + H2O = L-glutaminyl-tRNA(Gln) + L-glutamate + ADP + phosphate + H(+). In terms of biological role, allows the formation of correctly charged Gln-tRNA(Gln) through the transamidation of misacylated Glu-tRNA(Gln) in the mitochondria. The reaction takes place in the presence of glutamine and ATP through an activated gamma-phospho-Glu-tRNA(Gln). The protein is Glutamyl-tRNA(Gln) amidotransferase subunit A, mitochondrial of Macaca fascicularis (Crab-eating macaque).